A 277-amino-acid chain; its full sequence is Large ribosomal subunit protein uL2 (277 aa).

Residues 222–277 (GVAMNPVDHPHGGGEGRTSGGRHPVTPWGKPTKGKKTRSNKATDKFIMRSRHQRKK) form a disordered region.

This sequence belongs to the universal ribosomal protein uL2 family. As to quaternary structure, part of the 50S ribosomal subunit. Forms a bridge to the 30S subunit in the 70S ribosome.

Its function is as follows. One of the primary rRNA binding proteins. Required for association of the 30S and 50S subunits to form the 70S ribosome, for tRNA binding and peptide bond formation. It has been suggested to have peptidyltransferase activity; this is somewhat controversial. Makes several contacts with the 16S rRNA in the 70S ribosome. In Brucella ovis (strain ATCC 25840 / 63/290 / NCTC 10512), this protein is Large ribosomal subunit protein uL2.